A 299-amino-acid chain; its full sequence is MDLVLRVADYYFFTPYVYPATWPEDDIFRQAISLLIVTNVGAYILYFFCATLSYYFVFDHALMKHPQFLKNQVRREIKFTVQALPWISILTVALFLLEIRGYSKLHDDLGEFPYGLFELVVSIISFLFFTDMFIYWIHRGLHHRLVYKRLHKPHHIWKIPTPFASHAFHPIDGFLQSLPYHIYPFIFPLHKVVYLSLYILVNIWTISIHDGDFRVPQILQPFINGSAHHTDHHMFFDYNYGQYFTLWDRIGGSFKNPSSFEGKGPLSYVKEMTEGKRSSHSGNGCKNEKLFNGEFTKTE.

Transmembrane regions (helical) follow at residues 32–52, 79–99, and 117–137; these read ISLL…CATL, FTVQ…LLEI, and FELV…IYWI. The Fatty acid hydroxylase domain maps to 124-252; sequence ISFLFFTDMF…YFTLWDRIGG (129 aa). A Histidine box-1 motif is present at residues 138 to 143; it reads HRGLHH. Positions 151 to 155 match the Histidine box-2 motif; sequence HKPHH. The chain crosses the membrane as a helical span at residues 186–206; sequence IFPLHKVVYLSLYILVNIWTI. Positions 228-233 match the Histidine box-3 motif; that stretch reads HHTDHH. S253 bears the Phosphoserine mark. The interval 274-299 is disordered; the sequence is EGKRSSHSGNGCKNEKLFNGEFTKTE. The segment covering 286 to 299 has biased composition (basic and acidic residues); the sequence is KNEKLFNGEFTKTE.

The protein belongs to the sterol desaturase family. Fe cation serves as cofactor.

It localises to the endoplasmic reticulum membrane. It carries out the reaction a Delta(7)-sterol + 2 Fe(II)-[cytochrome b5] + O2 + 2 H(+) = a Delta(5),Delta(7)-sterol + 2 Fe(III)-[cytochrome b5] + 2 H2O. The enzyme catalyses lathosterol + 2 Fe(II)-[cytochrome b5] + O2 + 2 H(+) = 7-dehydrocholesterol + 2 Fe(III)-[cytochrome b5] + 2 H2O. The catalysed reaction is 5alpha-cholesta-7,24-dien-3beta-ol + 2 Fe(II)-[cytochrome b5] + O2 + 2 H(+) = 7-dehydrodesmosterol + 2 Fe(III)-[cytochrome b5] + 2 H2O. It functions in the pathway steroid biosynthesis; cholesterol biosynthesis. Functionally, catalyzes the penultimate step of the biosynthesis of cholesterol, the dehydrogenation of lathosterol into 7-dehydrocholesterol (7-DHC). Cholesterol is the major sterol component in mammalian membranes and a precursor for bile acid and steroid hormone synthesis. In addition to its essential role in cholesterol biosynthesis, it also indirectly regulates ferroptosis through the production of 7-DHC. By diverting the spread of damage caused by peroxyl radicals from the phospholipid components to its sterol nucleus, 7-DHC prevents this form of cell death. This Homo sapiens (Human) protein is Lathosterol oxidase.